We begin with the raw amino-acid sequence, 880 residues long: Leucine--tRNA ligase (880 aa).

The 'HIGH' region signature appears at 46–56; it reads PYPSGALHMGH. Positions 483 to 502 are disordered; the sequence is SPIKTEPTWRQTTCPDCGGP. Positions 638–642 match the 'KMSKS' region motif; sequence KMSKS. K641 lines the ATP pocket.

Belongs to the class-I aminoacyl-tRNA synthetase family.

It is found in the cytoplasm. It carries out the reaction tRNA(Leu) + L-leucine + ATP = L-leucyl-tRNA(Leu) + AMP + diphosphate. In Xanthomonas oryzae pv. oryzae (strain PXO99A), this protein is Leucine--tRNA ligase.